Reading from the N-terminus, the 154-residue chain is uncharacterized protein (154 aa).

The protein localises to the mitochondrion. This is an uncharacterized protein from Marchantia polymorpha (Common liverwort).